Reading from the N-terminus, the 398-residue chain is 1-deoxy-D-xylulose 5-phosphate reductoisomerase (398 aa).

NADPH contacts are provided by T10, G11, S12, I13, N38, and N124. K125 is a binding site for 1-deoxy-D-xylulose 5-phosphate. E126 lines the NADPH pocket. D150 contributes to the Mn(2+) binding site. 1-deoxy-D-xylulose 5-phosphate contacts are provided by S151, E152, S186, and H209. A Mn(2+)-binding site is contributed by E152. G215 is an NADPH binding site. S222, N227, K228, and E231 together coordinate 1-deoxy-D-xylulose 5-phosphate. Mn(2+) is bound at residue E231.

Belongs to the DXR family. Requires Mg(2+) as cofactor. Mn(2+) is required as a cofactor.

The enzyme catalyses 2-C-methyl-D-erythritol 4-phosphate + NADP(+) = 1-deoxy-D-xylulose 5-phosphate + NADPH + H(+). It functions in the pathway isoprenoid biosynthesis; isopentenyl diphosphate biosynthesis via DXP pathway; isopentenyl diphosphate from 1-deoxy-D-xylulose 5-phosphate: step 1/6. Catalyzes the NADPH-dependent rearrangement and reduction of 1-deoxy-D-xylulose-5-phosphate (DXP) to 2-C-methyl-D-erythritol 4-phosphate (MEP). The protein is 1-deoxy-D-xylulose 5-phosphate reductoisomerase of Baumannia cicadellinicola subsp. Homalodisca coagulata.